The sequence spans 124 residues: Large ribosomal subunit protein bL20 (124 aa).

It belongs to the bacterial ribosomal protein bL20 family.

In terms of biological role, binds directly to 23S ribosomal RNA and is necessary for the in vitro assembly process of the 50S ribosomal subunit. It is not involved in the protein synthesizing functions of that subunit. This Mycoplasma genitalium (strain ATCC 33530 / DSM 19775 / NCTC 10195 / G37) (Mycoplasmoides genitalium) protein is Large ribosomal subunit protein bL20 (rplT).